We begin with the raw amino-acid sequence, 485 residues long: uncharacterized protein (485 aa).

Transmembrane regions (helical) follow at residues 79–99 (LVTL…LIFA), 117–137 (VFAL…FLVF), 139–159 (FFSG…LADL), 170–190 (VIYF…SGFI), 199–219 (WEFW…FLLL), 275–295 (ILIC…LVLI), 313–333 (GLMY…AMPI), 355–375 (LPMG…FGWT), 380–400 (IFWF…IMTS), 421–441 (GVKI…ESLF), and 448–468 (WGCT…PILF).

Belongs to the major facilitator superfamily. CAR1 family.

It is found in the golgi apparatus. The protein localises to the membrane. This is an uncharacterized protein from Schizosaccharomyces pombe (strain 972 / ATCC 24843) (Fission yeast).